An 82-amino-acid chain; its full sequence is Small ribosomal subunit protein uS17 (82 aa).

It belongs to the universal ribosomal protein uS17 family. In terms of assembly, part of the 30S ribosomal subunit.

Its function is as follows. One of the primary rRNA binding proteins, it binds specifically to the 5'-end of 16S ribosomal RNA. This chain is Small ribosomal subunit protein uS17, found in Rhodopseudomonas palustris (strain TIE-1).